The following is an 83-amino-acid chain: Putative defensin-like protein 66 (83 aa).

Residues 1–22 (MGSSRLMITFIVVAMLAISSDL) form the signal peptide. 4 disulfide bridges follow: cysteine 38-cysteine 82, cysteine 42-cysteine 65, cysteine 51-cysteine 80, and cysteine 55-cysteine 81.

This sequence belongs to the DEFL family.

Its subcellular location is the secreted. The chain is Putative defensin-like protein 66 from Arabidopsis thaliana (Mouse-ear cress).